The chain runs to 365 residues: Bifunctional chorismate mutase/prephenate dehydratase (365 aa).

Residues 1–96 (MADQDQLKAL…SCLALEQPLK (96 aa)) enclose the Chorismate mutase domain. Substrate contacts are provided by Arg11, Arg28, Lys39, and Glu57. The 176-residue stretch at 97 to 272 (VAYLGPEGTF…NSTRFLIIGN (176 aa)) folds into the Prephenate dehydratase domain. The 78-residue stretch at 284–361 (SIIVSMRNKP…VALKVLGSYP (78 aa)) folds into the ACT domain.

It is found in the cytoplasm. It carries out the reaction chorismate = prephenate. The enzyme catalyses prephenate + H(+) = 3-phenylpyruvate + CO2 + H2O. It participates in amino-acid biosynthesis; L-phenylalanine biosynthesis; phenylpyruvate from prephenate: step 1/1. Its pathway is metabolic intermediate biosynthesis; prephenate biosynthesis; prephenate from chorismate: step 1/1. In terms of biological role, catalyzes the Claisen rearrangement of chorismate to prephenate and the decarboxylation/dehydration of prephenate to phenylpyruvate. The chain is Bifunctional chorismate mutase/prephenate dehydratase (pheA) from Pseudomonas aeruginosa (strain ATCC 15692 / DSM 22644 / CIP 104116 / JCM 14847 / LMG 12228 / 1C / PRS 101 / PAO1).